A 426-amino-acid chain; its full sequence is Isovaleryl-CoA dehydrogenase, mitochondrial (426 aa).

A mitochondrion-targeting transit peptide spans 1-32 (MATAAWLLGRRVASWRMRPPLQSLAGLITQRT). Residues Lys58 and Lys78 each carry the N6-acetyllysine; alternate modification. Residues Lys58 and Lys78 each carry the N6-succinyllysine; alternate modification. Residues 165-174 (LAMSEPNAGS) and 198-200 (WIT) contribute to the FAD site. Substrate is bound at residue Ser174. Position 222–223 (222–223 (SR)) interacts with substrate. At Lys241 the chain carries N6-acetyllysine. Substrate is bound by residues Tyr277 and 284-287 (DLER). Glu286 functions as the Proton acceptor in the catalytic mechanism. Arg312 provides a ligand contact to FAD. N6-succinyllysine is present on Lys318. FAD contacts are provided by residues Gln323 and 380 to 384 (QCLGG). Position 407 to 408 (407 to 408 (AG)) interacts with substrate. Position 409–411 (409–411 (TSE)) interacts with FAD.

Belongs to the acyl-CoA dehydrogenase family. Homotetramer. The cofactor is FAD.

The protein resides in the mitochondrion matrix. It catalyses the reaction 3-methylbutanoyl-CoA + oxidized [electron-transfer flavoprotein] + H(+) = 3-methylbut-2-enoyl-CoA + reduced [electron-transfer flavoprotein]. It carries out the reaction pentanoyl-CoA + oxidized [electron-transfer flavoprotein] + H(+) = (2E)-pentenoyl-CoA + reduced [electron-transfer flavoprotein]. The catalysed reaction is hexanoyl-CoA + oxidized [electron-transfer flavoprotein] + H(+) = (2E)-hexenoyl-CoA + reduced [electron-transfer flavoprotein]. The enzyme catalyses butanoyl-CoA + oxidized [electron-transfer flavoprotein] + H(+) = (2E)-butenoyl-CoA + reduced [electron-transfer flavoprotein]. Its pathway is amino-acid degradation; L-leucine degradation; (S)-3-hydroxy-3-methylglutaryl-CoA from 3-isovaleryl-CoA: step 1/3. Functionally, catalyzes the conversion of isovaleryl-CoA/3-methylbutanoyl-CoA to 3-methylbut-2-enoyl-CoA as an intermediate step in the leucine (Leu) catabolic pathway. To a lesser extent, is also able to catalyze the oxidation of other saturated short-chain acyl-CoA thioesters as pentanoyl-CoA, hexenoyl-CoA and butenoyl-CoA. The polypeptide is Isovaleryl-CoA dehydrogenase, mitochondrial (IVD) (Bos taurus (Bovine)).